The sequence spans 1135 residues: Eukaryotic translation initiation factor 3 subunit A (1135 aa).

Positions Leu319–Thr501 constitute a PCI domain. 2 stretches are compositionally biased toward basic and acidic residues: residues Gln588–Glu623 and Ala829–Asp899. Disordered stretches follow at residues Gln588–Ile631 and Ala829–Arg1135. Ser908 carries the phosphoserine modification. Basic and acidic residues-rich tracts occupy residues Glu920–Ser971, Ser985–Arg1045, Asp1053–Gln1081, and Ala1104–Asp1125.

This sequence belongs to the eIF-3 subunit A family. As to quaternary structure, component of the eukaryotic translation initiation factor 3 (eIF-3) complex. The eIF-3 complex interacts with pix.

Its subcellular location is the cytoplasm. RNA-binding component of the eukaryotic translation initiation factor 3 (eIF-3) complex, which is involved in protein synthesis of a specialized repertoire of mRNAs and, together with other initiation factors, stimulates binding of mRNA and methionyl-tRNAi to the 40S ribosome. The eIF-3 complex specifically targets and initiates translation of a subset of mRNAs involved in cell proliferation. The sequence is that of Eukaryotic translation initiation factor 3 subunit A from Drosophila erecta (Fruit fly).